Reading from the N-terminus, the 220-residue chain is UPF0758 protein CKO_05095 (220 aa).

The 123-residue stretch at 98–220 folds into the MPN domain; it reads ALLSPEMTRE…YVSFAERGWI (123 aa). Zn(2+)-binding residues include histidine 169, histidine 171, and aspartate 182. The JAMM motif motif lies at 169–182; that stretch reads HNHPSGCAEPSKAD.

Belongs to the UPF0758 family. YicR subfamily.

This is UPF0758 protein CKO_05095 from Citrobacter koseri (strain ATCC BAA-895 / CDC 4225-83 / SGSC4696).